Here is a 1520-residue protein sequence, read N- to C-terminus: MAERANLVFHNKEIDGTAMKRLISRLIDHFGMGYTSHILDQIKTLGFHQATTTSISLGIEDLLTIPSKGWLVQDAEQQSFLLEKHYYYGAVHAVEKLRQSVEIWYATSEYLKQEMNSNFRITDPSNPVYLMSFSGARGNASQVHQLVGMRGLMADPQGQMIDLPIQSNLREGLSLTEYIISCYGARKGVVDTAVRTADAGYLTRRLVEVVQHIIVRRRDCGTIQGISVSPQNGMTEKLFVQTLIGRVLADDIYIGSRCIASRNQDIGIGLVNRFITAFRAQPFRAQPIYIRTPFTCRSTSWICQLCYGRSPTHGDLVELGEAVGIIAGQSIGEPGTQLTLRTFHTGGVFTGGTADLIRSPSNGKIQFNEDLVHPTRTRHGQPAFLCYIDLHVTIQSQDILHSVNIPLKSLILVQNDQYVESEQVIAEIRAGTSTLHFKEKVQKHIYSESDGEMHWSTDVYHAPEYQYGNLRRLPKTSHLWILSVSMCRSSIASFSLHKDQDQMNTYSFSVDGRYIFDFSMANDQVSHRLLDTFGKKDREILDYLTPDRIVSNGHWNCFYPSILQDNSDLLAKKRRNRFAVPLQYHQEQEKERISCLGISMEIPFMGVLRRNTIFAYFDDPRYRKDKRGSGIVKFRYRTLEEEYRTREEEYRTREEDSEDEYESPENKYRTREGEGEYEILEDEYRTLEDEYETLEDEYGILEDEYRTLEKDSEEEYGSLENKYRTREGEGEYEILEEDSEEEYGSSEDGSEKEYGTLEEDSEEDSEEDSEDEYGSPEEDSILKKEGFIEHRGTKEFSLKYQKEVDRFFFILQELHILPRSSSLKVLDNSIIGVDTQLTKNTRSRLGGLVRVKRKKSHTELKIFSGDIHFPEEADKILGGSLIPPEREKKDSKESKKRKNWVYVQRKKILKSKEKYFVSVRPAVSYEMDEGRNLATLFPQDLLQEEDNLQLRLVNFISHENSKLTQRIYHTNSQFVRTCLVVNWEQEVKEGARASLVEVRTNDLIRDFLRIELVKSTISYTRRRYDRTSVGLIPNNRLDRNNTNSFYSKAKIQSLSQHQEVIGTLLNRNKEYPSLMILLASNCSRIGLFKNSKYPNAVKESNPRIPIRDVFGLLGVIVPSISNFSSSYYLLTHNQILLKKYLFLDNLKQTFQVLQGLKYSLIDENQRISNFGSNIMLEPFHLNWHFLHHDSWEETLAIIHLGQFICENLCLFKSHIKKSGQIFIVNMDSFVLRAAKPYLATIGATVHGHYGKILYKGDRLVTFIYEKSRSSDITQGLPKVEQIFEARSIDSLSPNLERRIEDWNERIPRILGVPWGFLIGAELTIAQSRISLVNKIQKVYRSQGVQIHNRHIEIIIRQVTSKVRVSEDGMSNVFLPGELIGLLRAERAGRALDESIYYRAILLGITRASLNTQSFISEASFQETARVLAKAALRGRIDWLKGLKENVVLGGIIPVGTGFQKFVHRSPQDKNLYFEIKKKNLFASEMRDILFLHTELVSSDSDVTNNFYETSETPFTPIYTI.

Zn(2+) contacts are provided by cysteine 220, cysteine 296, cysteine 303, and cysteine 306. Composition is skewed to basic and acidic residues over residues 645 to 654 (TREEEYRTRE) and 664 to 674 (PENKYRTREGE). 2 disordered regions span residues 645-676 (TREE…GEGE) and 705-786 (YRTL…KKEG). Composition is skewed to acidic residues over residues 730–748 (GEYE…SSED) and 756–779 (TLEE…PEED).

The protein belongs to the RNA polymerase beta' chain family. RpoC2 subfamily. In terms of assembly, in plastids the minimal PEP RNA polymerase catalytic core is composed of four subunits: alpha, beta, beta', and beta''. When a (nuclear-encoded) sigma factor is associated with the core the holoenzyme is formed, which can initiate transcription. The cofactor is Zn(2+).

It is found in the plastid. Its subcellular location is the chloroplast. It carries out the reaction RNA(n) + a ribonucleoside 5'-triphosphate = RNA(n+1) + diphosphate. Its function is as follows. DNA-dependent RNA polymerase catalyzes the transcription of DNA into RNA using the four ribonucleoside triphosphates as substrates. This is DNA-directed RNA polymerase subunit beta'' from Sorghum bicolor (Sorghum).